The chain runs to 550 residues: MSNTVVTGEVLDKSIREVVRILEDAVGCTAGPKGLTVAISKPYGSPEITKDGYKVMKSIKPEEPLAAAIASIITQSASQCNDKVGDGTTTCSILTAKVIEEVSKAKAAGSDIVSIKNGILKAKEAVLTALMSMRREVEEDEIAQVATLSANGDKNIGSKIAQCVKEVGKDGVITVEESKGFKDLEVEKTDGMQFDRGYLSPYFVTNAEKMLVEFENPYIFLTEKKINLVQSILPILENVARSGRPLLIIAEDVEGEALSTLVLNKLRGGLQVAAVKAPGFGDRRKDMLGDIAVIVGAKYVVNDELAVKMEDIALSDLGTAKSVRITKDATTIIGSVDSSSESIASRTNQIKAQIENSSSDYDKEKLRERLAKLSGGVAVLKVGGSSEVEVKERKDRVEDALHATRAAVEEGVVPGGGAALLYALSSLDGLKGKNDDEQWGIDIIRRAACAPIKRIIKNSGSEEAPCVIQHLLKQNDKELIYNVDTMNYANAFTSGVMDPLKVVRIAFDLAVSLAAVFMTLNAVVVDVPSKNDAAGAGAGGMGGMGGMGGF.

ATP-binding positions include 29–32, Lys-50, 86–90, Gly-416, and Asp-498; these read TAGP and DGTTT.

It belongs to the chaperonin (HSP60) family. Forms a cylinder of 14 subunits composed of two heptameric rings stacked back-to-back. Interacts with the co-chaperonin GroES.

The protein localises to the cytoplasm. The enzyme catalyses ATP + H2O + a folded polypeptide = ADP + phosphate + an unfolded polypeptide.. Functionally, together with its co-chaperonin GroES, plays an essential role in assisting protein folding. The GroEL-GroES system forms a nano-cage that allows encapsulation of the non-native substrate proteins and provides a physical environment optimized to promote and accelerate protein folding. The sequence is that of Chaperonin GroEL from Anaplasma phagocytophilum (strain HZ).